The following is a 525-amino-acid chain: Allantoate deiminase (525 aa).

The first 53 residues, 1–53, serve as a signal peptide directing secretion; that stretch reads MAVPHPSSSSSRSHPFLSHVYHTSFHHHHHHNHPSLVLFWCLVFSLLSPLALS. Over residues 56–75 the composition is skewed to low complexity; the sequence is SSSSSSSSDSSSSSSSHISL. The interval 56–78 is disordered; the sequence is SSSSSSSSDSSSSSSSHISLGIG. Residue asparagine 156 is glycosylated (N-linked (GlcNAc...) asparagine). The Mn(2+) site is built by histidine 167, aspartate 178, glutamate 215, histidine 281, and histidine 499.

Belongs to the peptidase M20A family. Homodimer. Mn(2+) is required as a cofactor. In terms of tissue distribution, expressed in seedlings, roots, stems, leaves, flowers, siliques and seeds.

It is found in the endoplasmic reticulum. It carries out the reaction allantoate + H2O + 2 H(+) = (S)-2-ureidoglycine + NH4(+) + CO2. Its activity is regulated as follows. Inhibited by borate, fluoride, L-Asn and L-Asp, but not by phenylphosphorodiamidate. Its function is as follows. Involved in the catabolism of purine nucleotides. Can use allantoate as substrate, but not Nalpha-carbamoyl-L-Asp, Nalpha-carbamoyl-L-Ala or Nalpha-carbamoyl-Gly. The sequential activity of AAH, UGLYAH and UAH allows a complete purine breakdown without the intermediate generation of urea. Involved in the regulation of seed maturation and seed dormancy. The sequence is that of Allantoate deiminase from Arabidopsis thaliana (Mouse-ear cress).